A 333-amino-acid chain; its full sequence is tRNA dimethylallyltransferase (333 aa).

23 to 30 (GPTGAGKT) contributes to the ATP binding site. 25–30 (TGAGKT) contacts substrate. Interaction with substrate tRNA regions lie at residues 53–56 (DSAL) and 177–181 (QRVQR).

This sequence belongs to the IPP transferase family. In terms of assembly, monomer. The cofactor is Mg(2+).

It carries out the reaction adenosine(37) in tRNA + dimethylallyl diphosphate = N(6)-dimethylallyladenosine(37) in tRNA + diphosphate. Its function is as follows. Catalyzes the transfer of a dimethylallyl group onto the adenine at position 37 in tRNAs that read codons beginning with uridine, leading to the formation of N6-(dimethylallyl)adenosine (i(6)A). This Polynucleobacter asymbioticus (strain DSM 18221 / CIP 109841 / QLW-P1DMWA-1) (Polynucleobacter necessarius subsp. asymbioticus) protein is tRNA dimethylallyltransferase.